The chain runs to 235 residues: Large ribosomal subunit protein uL1 (235 aa).

Belongs to the universal ribosomal protein uL1 family. As to quaternary structure, part of the 50S ribosomal subunit.

Binds directly to 23S rRNA. The L1 stalk is quite mobile in the ribosome, and is involved in E site tRNA release. In terms of biological role, protein L1 is also a translational repressor protein, it controls the translation of the L11 operon by binding to its mRNA. In Mycobacteroides abscessus (strain ATCC 19977 / DSM 44196 / CCUG 20993 / CIP 104536 / JCM 13569 / NCTC 13031 / TMC 1543 / L948) (Mycobacterium abscessus), this protein is Large ribosomal subunit protein uL1.